The chain runs to 790 residues: Nitrogen permease reactivator protein (790 aa).

The tract at residues 1 to 68 is disordered; sequence MSSLTRLLQE…DRNRANVPVP (68 aa). Residues 16 to 38 are compositionally biased toward polar residues; it reads TSNSSPRTSADTLTTTPESQSLD. Positions 46–58 are enriched in low complexity; that stretch reads SSHIGSVSNSSSS. The residue at position 47 (Ser-47) is a Phosphoserine; by autocatalysis. Phosphoserine occurs at positions 85, 90, 100, 111, 116, 125, 137, and 141. Positions 151–175 are enriched in polar residues; that stretch reads RLSTTSHTSGRAIPSLSSSIPYSVP. Disordered regions lie at residues 151–188 and 234–258; these read RLST…NSNS and LQKA…SGSF. Over residues 176–188 the composition is skewed to low complexity; the sequence is NSNKDNNSSNSNS. Residues 238–248 show a composition bias toward polar residues; it reads SMDSNNANATQ. The span at 249–258 shows a compositional bias: low complexity; that stretch reads SRSISRSGSF. Position 257 is a phosphoserine; by autocatalysis (Ser-257). Residues Ser-259, Ser-260, Ser-288, Ser-292, Ser-317, Ser-320, and Ser-328 each carry the phosphoserine modification. The span at 276 to 289 shows a compositional bias: low complexity; the sequence is NSNSAGMSFSANSN. A disordered region spans residues 276–357; sequence NSNSAGMSFS…QSVPRSQHSS (82 aa). Polar residues-rich tracts occupy residues 290–305, 314–339, and 346–357; these read GPSP…NGST, RQSS…SPSS, and PSQSVPRSQHSS. Tyr-334 carries the phosphotyrosine modification. Phosphoserine occurs at positions 336, 353, and 356. Ser-357 carries the phosphoserine; by autocatalysis modification. Ser-385 carries the phosphoserine modification. Residues 438-742 form the Protein kinase domain; it reads IKTGADLGAG…IEEIMEDPWI (305 aa). Residues 444-452 and Lys-467 each bind ATP; that span reads LGAGAGGSV. Asp-561 acts as the Proton acceptor in catalysis. Disordered regions lie at residues 666-704 and 766-790; these read LVTR…NIGP and HHTQ…QNNQ. Residues 677–688 are compositionally biased toward basic and acidic residues; sequence DESHSTEKKKPE. Positions 689 to 701 are enriched in low complexity; sequence SSSNNVSDPNNVN.

Belongs to the protein kinase superfamily. Ser/Thr protein kinase family. In terms of assembly, interacts with TIP41. Post-translationally, hyperphosphorylated in nitrogen-rich growth medium. Nitrogen limitation (or rapamycin treatment) leads to substantial, though not complete dephosphorylation. Autophosphorylation plays only a minor role and seems not to be regulated by the quality of the nitrogen source.

It localises to the cytoplasm. It catalyses the reaction L-seryl-[protein] + ATP = O-phospho-L-seryl-[protein] + ADP + H(+). The enzyme catalyses L-threonyl-[protein] + ATP = O-phospho-L-threonyl-[protein] + ADP + H(+). With respect to regulation, dephosphorylation by SIT4 activates NPR1 kinase activity. In terms of biological role, nutrient-regulated protein kinase that promotes the activity of at least 6 distinct transport systems for nitrogenous nutrients under conditions of nitrogen catabolite derepression. Under poor nitrogen growth conditions, required for post-Golgi sorting of the general amino acid permease GAP1 and the three known ammonia permeases, MEP1/2/3, to the plasma membrane. Also contributes to the stability and the retention of GAP1 at the plasma membrane. Inversely, promotes the degradation of tryptophan permease TAT2 under the same conditions. Activity is regulated by the TOR signaling pathway via phosphatase SIT4. Although thought to be involved in regulation of GLN3-dependent transcription by nitrogen catabolite repression, this seems to be an indirect effect from the reduced uptake of the nitrogen-repressing compound. The polypeptide is Nitrogen permease reactivator protein (NPR1) (Saccharomyces cerevisiae (strain ATCC 204508 / S288c) (Baker's yeast)).